The sequence spans 358 residues: MRFSASLLLALTGSAAASPIRAEEEIRVYDLPISLFDDLQGLDAAMKAAGREYIGTSLTVRNDFQEQNIIRTEFGSITPENAQKWDATEPNRGQFTFGSADQHMDWARQNGKHVRCHTLVWYSQLPGWVSNSGFNNATLQQVMQNHINQVMGRYRGRCNHWDVVNEAPRLMAMRLQIGEAYIPIAFRMAAQADPSAKLYYNDYNLEYLGPKVEGAARIVRLVKQYGARIDGVGYQAHLVTEPTPTQSTPTPSEEDLIKALRITADLGVDVAYTEIDIRMRTPSNAQKLQQLADAYYRVARSCMKVPRCVGMTIWGVTDRYSWVPNTFRGEGDALLWDSNYQRKAAYNAFLRGIQEPVN.

Residues 1-17 (MRFSASLLLALTGSAAA) form the signal peptide. Residues 40–352 (QGLDAAMKAA…KAAYNAFLRG (313 aa)) enclose the GH10 domain. Asn136 carries N-linked (GlcNAc...) asparagine glycosylation. Glu166 functions as the Proton donor in the catalytic mechanism. Residue Glu274 is the Nucleophile of the active site.

It belongs to the glycosyl hydrolase 10 (cellulase F) family.

It localises to the secreted. It catalyses the reaction Endohydrolysis of (1-&gt;4)-beta-D-xylosidic linkages in xylans.. It functions in the pathway glycan degradation; xylan degradation. Partial inhibition of activity is detected in the presence of Ag(+), Cu2(+) and SDS. Like most fungal xylanases, activity is completely inhibited by Hg(2+) since Hg(2+) could interact with tryptophan residues and oxidize the indole ring. Beta-mercaptoethanol enhances the enzymatic activity by counteracting the oxidation effects of the S-S linkage between cysteine residues. Endo-1,4-beta-xylanase involved in the hydrolysis of xylan, a major structural heterogeneous polysaccharide found in plant biomass representing the second most abundant polysaccharide in the biosphere, after cellulose. Is more active on soluble wheat arabinoxylan (defined as 100%) than on birchwood xylan (75.4%) and beechwood xylan (70.8%), and less active on insoluble wheat arabinoxylan (17.4%). Xylose is the major hydrolysis product of XynB. The polypeptide is Endo-1,4-beta-xylanase B (Humicola insolens (Soft-rot fungus)).